The primary structure comprises 360 residues: Metalloendoproteinase 5-MMP (360 aa).

Positions 1-20 (MRTLLLTILIFFFTVNPISA) are cleaved as a signal peptide. Residues 21-142 (KFYTNVSSIP…GGKILRTTEK (122 aa)) constitute a propeptide, activation peptide. N-linked (GlcNAc...) asparagine glycosylation is found at Asn25, Asn36, and Asn78. The short motif at 117–124 (PRCGNPDL) is the Cysteine switch element. Cys119 lines the Zn(2+) pocket. Asn168 and Asn191 each carry an N-linked (GlcNAc...) asparagine glycan. Position 270 (His270) interacts with Zn(2+). The active site involves Glu271. 2 residues coordinate Zn(2+): His274 and His280. A disordered region spans residues 312–336 (LYGGNPNGDGGGSKPSRESQSTGGD). Residue Ser337 is the site of GPI-anchor amidated serine attachment. Positions 338-360 (VRRWRGWMISLSSIATCIFLISV) are cleaved as a propeptide — removed in mature form.

This sequence belongs to the peptidase M10A family. Matrix metalloproteinases (MMPs) subfamily. Zn(2+) serves as cofactor. In terms of tissue distribution, mostly expressed in leaves, roots and stems, and, to a lower extent, in flowers.

It localises to the cell membrane. Repressed by acetohydroxamic acid (AHA). Functionally, matrix metalloproteinases (MMPs) or matrixins may play a role in the degradation and remodeling of the extracellular matrix (ECM) during development or in response to stresses. Active on Mca-KESAbuNLFVLKDpaR-NH(2) (QF75) and, to some extent, on McaPLGLDpaAR-NH(2) (QF24), myelin basic protein (MBP) and beta-casein. This chain is Metalloendoproteinase 5-MMP, found in Arabidopsis thaliana (Mouse-ear cress).